A 142-amino-acid polypeptide reads, in one-letter code: Large ribosomal subunit protein uL11 (142 aa).

Belongs to the universal ribosomal protein uL11 family. In terms of assembly, part of the ribosomal stalk of the 50S ribosomal subunit. Interacts with L10 and the large rRNA to form the base of the stalk. L10 forms an elongated spine to which L12 dimers bind in a sequential fashion forming a multimeric L10(L12)X complex. In terms of processing, one or more lysine residues are methylated.

In terms of biological role, forms part of the ribosomal stalk which helps the ribosome interact with GTP-bound translation factors. The protein is Large ribosomal subunit protein uL11 of Beijerinckia indica subsp. indica (strain ATCC 9039 / DSM 1715 / NCIMB 8712).